Here is a 229-residue protein sequence, read N- to C-terminus: Peptidase E (229 aa).

Catalysis depends on charge relay system residues Ser120, Asp135, and His157.

It belongs to the peptidase S51 family.

The protein localises to the cytoplasm. It catalyses the reaction Dipeptidase E catalyzes the hydrolysis of dipeptides Asp-|-Xaa. It does not act on peptides with N-terminal Glu, Asn or Gln, nor does it cleave isoaspartyl peptides.. Its function is as follows. Hydrolyzes dipeptides containing N-terminal aspartate residues. May play a role in allowing the cell to use peptide aspartate to spare carbon otherwise required for the synthesis of the aspartate family of amino acids. The chain is Peptidase E from Salmonella schwarzengrund (strain CVM19633).